A 1502-amino-acid polypeptide reads, in one-letter code: DNA-directed RNA polymerase subunit beta' (1502 aa).

Residues Cys-60, Cys-62, Cys-75, and Cys-78 each contribute to the Zn(2+) site. The disordered stretch occupies residues 265-293 (RKQRDLEDAEQLTGAERERKEYEASQERE). The segment covering 279–293 (AERERKEYEASQERE) has biased composition (basic and acidic residues). Asp-626, Asp-628, and Asp-630 together coordinate Mg(2+). The Zn(2+) site is built by Cys-1002, Cys-1075, Cys-1082, and Cys-1085. Residues 1472-1502 (SDDNGDEVGKNGEFADETPFTGDSDDRDNEI) form a disordered region.

This sequence belongs to the RNA polymerase beta' chain family. The RNAP catalytic core consists of 2 alpha, 1 beta, 1 beta' and 1 omega subunit. When a sigma factor is associated with the core the holoenzyme is formed, which can initiate transcription. The cofactor is Mg(2+). Zn(2+) is required as a cofactor.

The catalysed reaction is RNA(n) + a ribonucleoside 5'-triphosphate = RNA(n+1) + diphosphate. In terms of biological role, DNA-dependent RNA polymerase catalyzes the transcription of DNA into RNA using the four ribonucleoside triphosphates as substrates. The chain is DNA-directed RNA polymerase subunit beta' from Roseiflexus castenholzii (strain DSM 13941 / HLO8).